We begin with the raw amino-acid sequence, 332 residues long: Adenosine receptor A2b (332 aa).

At 1–8 (MQLETQDA) the chain is on the extracellular side. Residues 9-33 (LYVALELVIAALAVAGNVLVCAAVG) traverse the membrane as a helical segment. Topologically, residues 34–43 (ASSALQTPTN) are cytoplasmic. The chain crosses the membrane as a helical span at residues 44–67 (YFLVSLATADVAVGLFAIPFAITI). At 68–78 (SLGFCTDFHGC) the chain is on the extracellular side. A disulfide bond links Cys78 and Cys171. A helical transmembrane segment spans residues 79-101 (LFLACFVLVLTQSSIFSLLAVAV). The Cytoplasmic segment spans residues 102-121 (DRYLAIRVPLRYKGLVTGTR). The chain crosses the membrane as a helical span at residues 122 to 144 (ARGIIAVLWVLAFGIGLTPFLGW). Over 145–178 (NSKDSATSNCTELGDGIANKSCCPVTCLFENVVP) the chain is Extracellular. N-linked (GlcNAc...) asparagine glycans are attached at residues Asn153 and Asn163. Glu174 lines the adenosine pocket. The helical transmembrane segment at 179-203 (MSYMVYFNFFGCVLPPLLIMLVIYI) threads the bilayer. Over 204 to 235 (KIFMVACKQLQRMELMDHSRTTLQREIHAAKS) the chain is Cytoplasmic. Residues 236–259 (LAMIVGIFALCWLPVHAINCITLF) form a helical membrane-spanning segment. Asn254 lines the adenosine pocket. Over 260 to 267 (HPALAKDK) the chain is Extracellular. A helical membrane pass occupies residues 268-291 (PKWVMNVAILLSHANSVVNPIVYA). Residues Ser279 and His280 each contribute to the adenosine site. Residues 292 to 332 (YRNRDFRYSFHKIISRYVLCQAETKGGSGQAGAQSTLSLGL) lie on the Cytoplasmic side of the membrane. Cys311 carries S-palmitoyl cysteine lipidation.

This sequence belongs to the G-protein coupled receptor 1 family.

The protein resides in the cell membrane. In terms of biological role, receptor for adenosine. The activity of this receptor is mediated by G proteins which activate adenylyl cyclase. This chain is Adenosine receptor A2b (Adora2b), found in Mus musculus (Mouse).